Reading from the N-terminus, the 232-residue chain is Phosphatidylserine decarboxylase proenzyme (232 aa).

S190 functions as the Schiff-base intermediate with substrate; via pyruvic acid in the catalytic mechanism. Residue S190 is modified to Pyruvic acid (Ser); by autocatalysis.

It belongs to the phosphatidylserine decarboxylase family. PSD-A subfamily. In terms of assembly, heterodimer of a large membrane-associated beta subunit and a small pyruvoyl-containing alpha subunit. The cofactor is pyruvate. In terms of processing, is synthesized initially as an inactive proenzyme. Formation of the active enzyme involves a self-maturation process in which the active site pyruvoyl group is generated from an internal serine residue via an autocatalytic post-translational modification. Two non-identical subunits are generated from the proenzyme in this reaction, and the pyruvate is formed at the N-terminus of the alpha chain, which is derived from the carboxyl end of the proenzyme. The post-translation cleavage follows an unusual pathway, termed non-hydrolytic serinolysis, in which the side chain hydroxyl group of the serine supplies its oxygen atom to form the C-terminus of the beta chain, while the remainder of the serine residue undergoes an oxidative deamination to produce ammonia and the pyruvoyl prosthetic group on the alpha chain.

The protein localises to the cell membrane. It carries out the reaction a 1,2-diacyl-sn-glycero-3-phospho-L-serine + H(+) = a 1,2-diacyl-sn-glycero-3-phosphoethanolamine + CO2. It functions in the pathway phospholipid metabolism; phosphatidylethanolamine biosynthesis; phosphatidylethanolamine from CDP-diacylglycerol: step 2/2. In terms of biological role, catalyzes the formation of phosphatidylethanolamine (PtdEtn) from phosphatidylserine (PtdSer). The sequence is that of Phosphatidylserine decarboxylase proenzyme from Rhodopseudomonas palustris (strain TIE-1).